The primary structure comprises 124 residues: Small ribosomal subunit protein uS12 (124 aa).

A disordered region spans residues 1–24; that stretch reads MPTINQLVRQGRKKSVKKTNTPAL. Residue D89 is modified to 3-methylthioaspartic acid.

The protein belongs to the universal ribosomal protein uS12 family. Part of the 30S ribosomal subunit. Contacts proteins S8 and S17. May interact with IF1 in the 30S initiation complex.

Functionally, with S4 and S5 plays an important role in translational accuracy. Interacts with and stabilizes bases of the 16S rRNA that are involved in tRNA selection in the A site and with the mRNA backbone. Located at the interface of the 30S and 50S subunits, it traverses the body of the 30S subunit contacting proteins on the other side and probably holding the rRNA structure together. The combined cluster of proteins S8, S12 and S17 appears to hold together the shoulder and platform of the 30S subunit. This Desulfotalea psychrophila (strain LSv54 / DSM 12343) protein is Small ribosomal subunit protein uS12.